We begin with the raw amino-acid sequence, 89 residues long: MAKKSKVAKELKRQQLVEQYAGIRRELKEKGDYEALSKLPRDSAPGRLHNRCMVTGRPRAYMRKFKMSRIAFRELAHKGQIPGVKKASW.

The protein belongs to the universal ribosomal protein uS14 family. As to quaternary structure, contacts proteins S3 and S10. Part of the 30S ribosomal subunit.

Functionally, binds 16S rRNA, required for the assembly of 30S particles and may also be responsible for determining the conformation of the 16S rRNA at the A site. In terms of biological role, non-essential protein. A second form of uS14, it can integrate into the 30S subunit where it partially compensates for loss of the major uS14 protein (AC P12878) in restoring 70S formation, although it does not seem to be incorporated into the ribosome as well as the major uS14. The chain is Small ribosomal subunit protein uS14A from Bacillus subtilis (strain 168).